The primary structure comprises 78 residues: Large ribosomal subunit protein bL28 (78 aa).

This sequence belongs to the bacterial ribosomal protein bL28 family.

This is Large ribosomal subunit protein bL28 from Francisella philomiragia subsp. philomiragia (strain ATCC 25017 / CCUG 19701 / FSC 153 / O#319-036).